Consider the following 144-residue polypeptide: MKKITGIVKLQLPAGKATPAPPVGPALGQYGANIMEFTKAFNAQTADKGDAIIPVEITIFADRSFTFITKTPPMSYLIRKAAGLSKGSATPNKAKVGKLNWEQVLEIAKTKMPDLNAGSLEAAANTVAGTARSMGVTIEGAPNA.

This sequence belongs to the universal ribosomal protein uL11 family. As to quaternary structure, part of the ribosomal stalk of the 50S ribosomal subunit. Interacts with L10 and the large rRNA to form the base of the stalk. L10 forms an elongated spine to which L12 dimers bind in a sequential fashion forming a multimeric L10(L12)X complex. One or more lysine residues are methylated.

Functionally, forms part of the ribosomal stalk which helps the ribosome interact with GTP-bound translation factors. The chain is Large ribosomal subunit protein uL11 from Deinococcus deserti (strain DSM 17065 / CIP 109153 / LMG 22923 / VCD115).